Reading from the N-terminus, the 539-residue chain is Monocarboxylate transporter 8 (539 aa).

The disordered stretch occupies residues M1–F92. At A2 the chain carries N-acetylalanine. Over A2–E96 the chain is Cytoplasmic. Residues P31–P41 show a composition bias toward acidic residues. The span at E42–L64 shows a compositional bias: pro residues. The chain crosses the membrane as a helical span at residues G97–I117. Over H118–A143 the chain is Extracellular. Residues A144–F164 form a helical membrane-spanning segment. Residues T165 to R171 lie on the Cytoplasmic side of the membrane. A helical membrane pass occupies residues I172 to S192. The Extracellular segment spans residues S193–T200. Residues Y201–G221 traverse the membrane as a helical segment. Topologically, residues H222–G229 are cytoplasmic. A helical membrane pass occupies residues L230–I250. At R251 to K258 the chain is on the extracellular side. The chain crosses the membrane as a helical span at residues L259–T279. The Cytoplasmic segment spans residues Y280–R322. Residues I323–M343 form a helical membrane-spanning segment. Residues K344–T356 lie on the Extracellular side of the membrane. A helical transmembrane segment spans residues W357–I377. Residues S378–K386 lie on the Cytoplasmic side of the membrane. The helical transmembrane segment at I387–C407 threads the bilayer. At R408–D409 the chain is on the extracellular side. The helical transmembrane segment at F410–I430 threads the bilayer. Residues M431–A447 are Cytoplasmic-facing. A helical transmembrane segment spans residues I448 to L468. At L469–H477 the chain is on the extracellular side. The helical transmembrane segment at V478–P498 threads the bilayer. The Cytoplasmic segment spans residues L499 to I539. Basic and acidic residues predominate over residues E508 to L518. Residues E508–I539 are disordered.

This sequence belongs to the major facilitator superfamily. Monocarboxylate porter (TC 2.A.1.13) family. Monomer. Homodimer. Homooligomer. As to expression, highly expressed in liver and heart. In adult brain tissue expression is largely confined to endothelial cells of the blood-brain barrier (at protein level).

The protein localises to the cell membrane. The protein resides in the apical cell membrane. It carries out the reaction 3,3',5-triiodo-L-thyronine(out) = 3,3',5-triiodo-L-thyronine(in). The catalysed reaction is L-thyroxine(out) = L-thyroxine(in). It catalyses the reaction 3,3',5'-triiodo-L-thyronine(out) = 3,3',5'-triiodo-L-thyronine(in). The enzyme catalyses 3,3'-diiodo-L-thyronine(out) = 3,3'-diiodo-L-thyronine(in). Specific thyroid hormone transmembrane transporter, that mediates both uptake and efflux of thyroid hormones across the cell membrane independently of pH or a Na(+) gradient. Major substrates are the iodothyronines T3 and T4 and to a lesser extent rT3 and 3,3-diiodothyronine (3,3'-T2). Acts as an important mediator of thyroid hormone transport, especially T3, through the blood-brain barrier. The chain is Monocarboxylate transporter 8 (SLC16A2) from Homo sapiens (Human).